The sequence spans 1019 residues: MEPGEVKDRILENISLSVKKLQSYFAACEDEIPAIRNHDKVLQRLCEHLDHALLYGLQDLSSGYWVLVVHFTRREAIKQIEVLQHVATNLGRSRAWLYLALNENSLESYLRLFQENLGLLHKYYVKNALVCSHDHLTLFLTLVSGLEFIRFELDLDAPYLDLAPYMPDYYKPQYLLDFEDRLPSSVHGSDSLSLNSFNSVTSTNLEWDDSAIAPSSEDYDFGDVFPAVPSVPSTDWEDGDLTDTVSGPRSTASDLTSSKASTRSPTQRQNPFNEEPAETVSSSDTTPVHTTSQEKEEAQALDPPDACTELEVIRVTKKKKIGKKKKSRSDEEASPLHPACSQKKCAKQGDGDSRNGSPSLGRDSPDTMLASPQEEGEGPSSTTESSERSEPGLLIPEMKDTSMERLGQPLSKVIDQLNGQLDPSTWCSRAEPPDQSFRTGSPGDAPERPPLCDFSEGLSAPMDFYRFTVESPSTVTSGGGHHDPAGLGQPLHVPSSPEAAGQEEEGGGGEGQTPRPLEDTTREAQELEAQLSLVREGPVSEPEPGTQEVLCQLKRDQPSPCLSSAEDSGVDEGQGSPSEMVHSSEFRVDNNHLLLLMIHVFRENEEQLFKMIRMSTGHMEGNLQLLYVLLTDCYVYLLRKGATEKPYLVEEAVSYNELDYVSVGLDQQTVKLVCTNRRKQFLLDTADVALAEFFLASLKSAMIKGCREPPYPSILTDATMEKLALAKFVAQESKCEASAVTVRFYGLVHWEDPTDESLGPTPCHCSPPEGTITKEGMLHYKAGTSYLGKEHWKTCFVVLSNGILYQYPDRTDVIPLLSVNMGGEQCGGCRRANTTDRPHAFQVILSDRPCLELSAESEAEMAEWMQHLCQAVSKGVIPQGVAPSPCIPCCLVLTDDRLFTCHEDCQTSFFRSLGTAKLGDISAVSTEPGKEYCVLEFSQDSQQLLPPWVIYLSCTSELDRLLSALNSGWKTIYQVDLPHTAIQEASNKKKFEDALSLIHSAWQRSDSLCRGRASRDPWC.

Met1 is modified (N-acetylmethionine). The tract at residues 1–310 (MEPGEVKDRI…LDPPDACTEL (310 aa)) is interaction with KIF5B. Residues 36-158 (RNHDKVLQRL…IRFELDLDAP (123 aa)) form the RUN domain. Disordered stretches follow at residues 230–458 (SVPS…SEGL), 471–525 (SPST…REAQ), and 557–581 (QPSP…SEMV). 2 stretches are compositionally biased toward polar residues: residues 243-272 (DTVS…QNPF) and 279-291 (TVSS…VHTT). Positions 315 to 327 (VTKKKKIGKKKKS) are enriched in basic residues. Residues 417-427 (LNGQLDPSTWC) show a composition bias toward polar residues. Ser441 carries the post-translational modification Phosphoserine. Over residues 516-525 (PLEDTTREAQ) the composition is skewed to basic and acidic residues. An interaction with sifA region spans residues 762-885 (PCHCSPPEGT…VIPQGVAPSP (124 aa)). Positions 771 to 873 (TITKEGMLHY…WMQHLCQAVS (103 aa)) constitute a PH domain.

In terms of assembly, interacts with KLC2 (via TPR repeats). Interacts with KIF5B. Interacts with BORCS5. Interacts (via RUN domain) with ARL8B (GTP-bound form); PLEKHM1 and PLEKHM2 compete for interaction with ARL8B. Interacts with ARL8A. (Microbial infection) Interacts with the S.typhimurium sifA protein; required for S.typhimurium infection.

Its subcellular location is the cytoplasm. It localises to the lysosome membrane. Functionally, plays a role in lysosomes movement and localization at the cell periphery acting as an effector of ARL8B. Required for ARL8B to exert its effects on lysosome location, recruits kinesin-1 to lysosomes and hence direct their movement toward microtubule plus ends. Binding to ARL8B provides a link from lysosomal membranes to plus-end-directed motility. Critical factor involved in NK cell-mediated cytotoxicity. Drives the polarization of cytolytic granules and microtubule-organizing centers (MTOCs) toward the immune synapse between effector NK lymphocytes and target cells. Required for maintenance of the Golgi apparatus organization. May play a role in membrane tubulation. This chain is Pleckstrin homology domain-containing family M member 2, found in Homo sapiens (Human).